The following is a 343-amino-acid chain: UDP-N-acetylglucosamine--N-acetylmuramyl-(pentapeptide) pyrophosphoryl-undecaprenol N-acetylglucosamine transferase (343 aa).

UDP-N-acetyl-alpha-D-glucosamine contacts are provided by residues 10–12 (TGG), asparagine 113, serine 174, and glutamine 275.

It belongs to the glycosyltransferase 28 family. MurG subfamily.

It localises to the cell membrane. It catalyses the reaction di-trans,octa-cis-undecaprenyl diphospho-N-acetyl-alpha-D-muramoyl-L-alanyl-D-glutamyl-meso-2,6-diaminopimeloyl-D-alanyl-D-alanine + UDP-N-acetyl-alpha-D-glucosamine = di-trans,octa-cis-undecaprenyl diphospho-[N-acetyl-alpha-D-glucosaminyl-(1-&gt;4)]-N-acetyl-alpha-D-muramoyl-L-alanyl-D-glutamyl-meso-2,6-diaminopimeloyl-D-alanyl-D-alanine + UDP + H(+). It functions in the pathway cell wall biogenesis; peptidoglycan biosynthesis. Its function is as follows. Cell wall formation. Catalyzes the transfer of a GlcNAc subunit on undecaprenyl-pyrophosphoryl-MurNAc-pentapeptide (lipid intermediate I) to form undecaprenyl-pyrophosphoryl-MurNAc-(pentapeptide)GlcNAc (lipid intermediate II). The protein is UDP-N-acetylglucosamine--N-acetylmuramyl-(pentapeptide) pyrophosphoryl-undecaprenol N-acetylglucosamine transferase of Wolbachia sp. subsp. Drosophila simulans (strain wRi).